The following is a 188-amino-acid chain: Dual specificity protein phosphatase 18 (188 aa).

The 142-residue stretch at 19–160 (GLSQITKSLY…LIHYEFQLFG (142 aa)) folds into the Tyrosine-protein phosphatase domain. The Phosphocysteine intermediate role is filled by Cys104.

The protein belongs to the protein-tyrosine phosphatase family. Non-receptor class dual specificity subfamily. As to expression, widely expressed with highest levels in liver, brain, ovary and testis.

It is found in the cytoplasm. It localises to the nucleus. The protein localises to the mitochondrion inner membrane. The enzyme catalyses O-phospho-L-tyrosyl-[protein] + H2O = L-tyrosyl-[protein] + phosphate. It catalyses the reaction O-phospho-L-seryl-[protein] + H2O = L-seryl-[protein] + phosphate. It carries out the reaction O-phospho-L-threonyl-[protein] + H2O = L-threonyl-[protein] + phosphate. With respect to regulation, activated by manganese ions, inhibited by iodoacetic acid. Its function is as follows. Can dephosphorylate single and diphosphorylated synthetic MAPK peptides, with preference for the phosphotyrosine and diphosphorylated forms over phosphothreonine. In vitro, dephosphorylates p-nitrophenyl phosphate (pNPP). This chain is Dual specificity protein phosphatase 18 (DUSP18), found in Homo sapiens (Human).